A 119-amino-acid chain; its full sequence is Fluoride-specific ion channel FluC 2 (119 aa).

Residues Phe-46 to Val-66 traverse the membrane as a helical segment. 2 residues coordinate Na(+): Gly-70 and Thr-73. The chain crosses the membrane as a helical span at residues Leu-96–Val-116.

It belongs to the fluoride channel Fluc/FEX (TC 1.A.43) family.

Its subcellular location is the cell membrane. It catalyses the reaction fluoride(in) = fluoride(out). Na(+) is not transported, but it plays an essential structural role and its presence is essential for fluoride channel function. Functionally, fluoride-specific ion channel. Important for reducing fluoride concentration in the cell, thus reducing its toxicity. The sequence is that of Fluoride-specific ion channel FluC 2 from Haloarcula marismortui (strain ATCC 43049 / DSM 3752 / JCM 8966 / VKM B-1809) (Halobacterium marismortui).